The primary structure comprises 358 residues: Phospho-N-acetylmuramoyl-pentapeptide-transferase (358 aa).

10 helical membrane passes run 19–39 (YLTL…VLIG), 71–91 (TMGG…WADL), 95–115 (YVWV…IDDY), 126–146 (LIAR…ALYL), 166–186 (VMPQ…VGTS), 194–214 (GLDG…AIFA), 237–257 (LVIV…FNTY), 261–281 (VFMG…IAVL), 286–306 (IVLV…ILQV), and 336–356 (VIVR…ATLK).

The protein belongs to the glycosyltransferase 4 family. MraY subfamily. Requires Mg(2+) as cofactor.

The protein resides in the cell inner membrane. It carries out the reaction UDP-N-acetyl-alpha-D-muramoyl-L-alanyl-gamma-D-glutamyl-meso-2,6-diaminopimeloyl-D-alanyl-D-alanine + di-trans,octa-cis-undecaprenyl phosphate = di-trans,octa-cis-undecaprenyl diphospho-N-acetyl-alpha-D-muramoyl-L-alanyl-D-glutamyl-meso-2,6-diaminopimeloyl-D-alanyl-D-alanine + UMP. The protein operates within cell wall biogenesis; peptidoglycan biosynthesis. In terms of biological role, catalyzes the initial step of the lipid cycle reactions in the biosynthesis of the cell wall peptidoglycan: transfers peptidoglycan precursor phospho-MurNAc-pentapeptide from UDP-MurNAc-pentapeptide onto the lipid carrier undecaprenyl phosphate, yielding undecaprenyl-pyrophosphoryl-MurNAc-pentapeptide, known as lipid I. This chain is Phospho-N-acetylmuramoyl-pentapeptide-transferase, found in Pseudoalteromonas atlantica (strain T6c / ATCC BAA-1087).